Reading from the N-terminus, the 621-residue chain is Chaperone protein HtpG (621 aa).

The segment at 1 to 328 is a; substrate-binding; it reads MTQEKKKFDA…SEDLPLNISR (328 aa). Positions 329 to 544 are b; that stretch reads ESLQHNSVLE…DSAMDIRMER (216 aa). Residues 475-495 form a disordered region; it reads SDIDVEQTTSQSEDKNTHSKK. Over residues 486–495 the composition is skewed to basic and acidic residues; the sequence is SEDKNTHSKK. Positions 545–621 are c; sequence FLIEQKQITA…LNDIVQKAIL (77 aa).

Belongs to the heat shock protein 90 family. In terms of assembly, homodimer.

It localises to the cytoplasm. Its function is as follows. Molecular chaperone. Has ATPase activity. This is Chaperone protein HtpG from Rickettsia akari (strain Hartford).